Reading from the N-terminus, the 741-residue chain is DNA ligase (741 aa).

NAD(+)-binding positions include 78 to 82 (DADYD), 127 to 128 (SL), and E161. The active-site N6-AMP-lysine intermediate is K163. NAD(+)-binding residues include R184, E219, K335, and K359. Zn(2+) is bound by residues C464, C467, C482, and C488. In terms of domain architecture, BRCT spans 662 to 741 (VGDSPVAGKT…DAWRVLAGLA (80 aa)).

This sequence belongs to the NAD-dependent DNA ligase family. LigA subfamily. The cofactor is Mg(2+). Mn(2+) is required as a cofactor.

The enzyme catalyses NAD(+) + (deoxyribonucleotide)n-3'-hydroxyl + 5'-phospho-(deoxyribonucleotide)m = (deoxyribonucleotide)n+m + AMP + beta-nicotinamide D-nucleotide.. In terms of biological role, DNA ligase that catalyzes the formation of phosphodiester linkages between 5'-phosphoryl and 3'-hydroxyl groups in double-stranded DNA using NAD as a coenzyme and as the energy source for the reaction. It is essential for DNA replication and repair of damaged DNA. In Dinoroseobacter shibae (strain DSM 16493 / NCIMB 14021 / DFL 12), this protein is DNA ligase.